We begin with the raw amino-acid sequence, 190 residues long: Peptidyl-tRNA hydrolase (190 aa).

Phenylalanine 14 provides a ligand contact to tRNA. The Proton acceptor role is filled by histidine 19. Positions 64, 66, and 112 each coordinate tRNA.

Belongs to the PTH family. Monomer.

Its subcellular location is the cytoplasm. The catalysed reaction is an N-acyl-L-alpha-aminoacyl-tRNA + H2O = an N-acyl-L-amino acid + a tRNA + H(+). Hydrolyzes ribosome-free peptidyl-tRNAs (with 1 or more amino acids incorporated), which drop off the ribosome during protein synthesis, or as a result of ribosome stalling. In terms of biological role, catalyzes the release of premature peptidyl moieties from peptidyl-tRNA molecules trapped in stalled 50S ribosomal subunits, and thus maintains levels of free tRNAs and 50S ribosomes. The sequence is that of Peptidyl-tRNA hydrolase from Staphylococcus haemolyticus (strain JCSC1435).